A 336-amino-acid chain; its full sequence is Fructose-1,6-bisphosphatase class 1 (336 aa).

Mg(2+) is bound by residues Glu-90, Asp-112, Leu-114, and Asp-115. Substrate is bound by residues 115-118 (DGSS), Asn-207, and Lys-273. Glu-279 contacts Mg(2+).

The protein belongs to the FBPase class 1 family. As to quaternary structure, homotetramer. Requires Mg(2+) as cofactor.

The protein localises to the cytoplasm. The catalysed reaction is beta-D-fructose 1,6-bisphosphate + H2O = beta-D-fructose 6-phosphate + phosphate. The protein operates within carbohydrate biosynthesis; gluconeogenesis. The protein is Fructose-1,6-bisphosphatase class 1 of Xanthomonas euvesicatoria pv. vesicatoria (strain 85-10) (Xanthomonas campestris pv. vesicatoria).